The chain runs to 330 residues: Urokinase plasminogen activator surface receptor (330 aa).

The first 20 residues, 1-20, serve as a signal peptide directing secretion; it reads MGQPLLLLLLVYTYIPGSWG. UPAR/Ly6 domains follow at residues 21 to 112, 113 to 208, and 209 to 300; these read LRCL…RNRY, LECA…PPNG, and LQCY…PGKG. 3 disulfides stabilise this stretch: cysteine 23–cysteine 44, cysteine 26–cysteine 32, and cysteine 37–cysteine 65. An N-linked (GlcNAc...) asparagine glycan is attached at asparagine 28. Asparagine 72 is a glycosylation site (N-linked (GlcNAc...) asparagine). 11 disulfide bridges follow: cysteine 91–cysteine 96, cysteine 115–cysteine 142, cysteine 118–cysteine 125, cysteine 135–cysteine 164, cysteine 170–cysteine 187, cysteine 188–cysteine 193, cysteine 211–cysteine 239, cysteine 214–cysteine 222, cysteine 232–cysteine 258, cysteine 264–cysteine 282, and cysteine 283–cysteine 288. 2 N-linked (GlcNAc...) asparagine glycosylation sites follow: asparagine 179 and asparagine 189. An N-linked (GlcNAc...) asparagine glycan is attached at asparagine 279. Glycine 300 carries the GPI-anchor amidated glycine lipid modification. The propeptide at 301-330 is removed in mature form; the sequence is GAPKTSPAHLSFFVSLLLTARLWGATLLCT.

In terms of assembly, monomer. Interacts (via the UPAR/Ly6 domains) with SRPX2. Interacts with MRC2. Interacts with SORL1 (via N-terminal ectodomain); this interaction decreases PLAUR internalization. The ternary complex composed of PLAUR-PLAU-SERPINE1 also interacts with SORL1. Interacts with CD82; this interaction prevents PLAUR from binding to its high affinity ligand PLAU.

The protein resides in the cell membrane. Its function is as follows. Acts as a receptor for urokinase plasminogen activator. Plays a role in localizing and promoting plasmin formation. Mediates the proteolysis-independent signal transduction activation effects of U-PA. The sequence is that of Urokinase plasminogen activator surface receptor (PLAUR) from Bos taurus (Bovine).